Consider the following 388-residue polypeptide: Acyl-CoA dehydrogenase fadE12 (388 aa).

It belongs to the acyl-CoA dehydrogenase family. FAD is required as a cofactor.

It carries out the reaction a 2,3-saturated acyl-CoA + A = a 2,3-dehydroacyl-CoA + AH2. This is Acyl-CoA dehydrogenase fadE12 (fadE12) from Mycobacterium bovis (strain ATCC BAA-935 / AF2122/97).